Consider the following 351-residue polypeptide: Cytochrome c biogenesis protein CcsA (351 aa).

8 helical membrane-spanning segments follow: residues 12–32, 37–57, 68–88, 97–117, 143–163, 259–279, 294–314, and 320–340; these read NISFGILFATMLIYWLGAAFP, LSILGSTGMAIANLCIATLLG, ISNLYESLFFLTWGITTIHLI, LVGVFTSPIAMGISAFAALTL, MMLSYATLIVGALLAIAFLII, IIGLGFPLLTIGIIAGAVWAN, WALITWLVFAAYLHARITKGW, and AILAATGFAVVWVCYLGVNLL.

The protein belongs to the CcmF/CycK/Ccl1/NrfE/CcsA family. As to quaternary structure, may interact with ccs1.

It localises to the cellular thylakoid membrane. Its function is as follows. Required during biogenesis of c-type cytochromes (cytochrome c6 and cytochrome f) at the step of heme attachment. This is Cytochrome c biogenesis protein CcsA from Trichodesmium erythraeum (strain IMS101).